The primary structure comprises 258 residues: tRNA pseudouridine synthase A (258 aa).

Catalysis depends on aspartate 54, which acts as the Nucleophile. Substrate is bound at residue tyrosine 112.

It belongs to the tRNA pseudouridine synthase TruA family. As to quaternary structure, homodimer.

It catalyses the reaction uridine(38/39/40) in tRNA = pseudouridine(38/39/40) in tRNA. Its function is as follows. Formation of pseudouridine at positions 38, 39 and 40 in the anticodon stem and loop of transfer RNAs. The protein is tRNA pseudouridine synthase A of Geobacillus kaustophilus (strain HTA426).